We begin with the raw amino-acid sequence, 257 residues long: Acetylglutamate kinase (257 aa).

Substrate-binding positions include 41-42, arginine 63, and asparagine 158; that span reads GG.

The protein belongs to the acetylglutamate kinase family. ArgB subfamily.

It is found in the cytoplasm. It catalyses the reaction N-acetyl-L-glutamate + ATP = N-acetyl-L-glutamyl 5-phosphate + ADP. It participates in amino-acid biosynthesis; L-arginine biosynthesis; N(2)-acetyl-L-ornithine from L-glutamate: step 2/4. Functionally, catalyzes the ATP-dependent phosphorylation of N-acetyl-L-glutamate. This Bacteroides thetaiotaomicron (strain ATCC 29148 / DSM 2079 / JCM 5827 / CCUG 10774 / NCTC 10582 / VPI-5482 / E50) protein is Acetylglutamate kinase.